Consider the following 347-residue polypeptide: CCN family member 2 (347 aa).

The first 24 residues, 1–24 (MLASVAGPVSLALVLLLCTRPATG), serve as a signal peptide directing secretion. An IGFBP N-terminal domain is found at 25-96 (QDCSAQCQCA…NRKIGVCTAK (72 aa)). Intrachain disulfides connect C27–C52, C31–C54, C33–C55, C41–C58, C66–C80, and C72–C93. Residues 99-165 (APCVFGGSVY…GKCCEEWVCD (67 aa)) enclose the VWFC domain. The region spanning 196-241 (NCLVQTTEWSACSKTCGMGISTRVTNDNTFCRLEKQSRLCMVRPCE) is the TSP type-1 domain. The tract at residues 245–347 (EENIKKGKKC…YYRKMYGDMA (103 aa)) is heparin-binding. Intrachain disulfides connect C254–C291, C271–C305, C282–C321, C285–C323, and C290–C327. The CTCK domain maps to 254 to 328 (CIRTPKIAKP…KTCACHYNCP (75 aa)).

Belongs to the CCN family. Monomer. Interacts with TSKU.

The protein localises to the secreted. It is found in the extracellular space. Its subcellular location is the extracellular matrix. In terms of biological role, major connective tissue mitoattractant secreted by vascular endothelial cells. Promotes proliferation and differentiation of chondrocytes. Is involved in the stimulation of osteoblast differentiation and has a critical role in osteogenesis. Mediates heparin- and divalent cation-dependent cell adhesion in many cell types including fibroblasts, myofibroblasts, endothelial and epithelial cells. Enhances fibroblast growth factor-induced DNA synthesis. The protein is CCN family member 2 of Rattus norvegicus (Rat).